The chain runs to 178 residues: Large ribosomal subunit protein uL6 (178 aa).

The protein belongs to the universal ribosomal protein uL6 family. As to quaternary structure, part of the 50S ribosomal subunit.

Its function is as follows. This protein binds to the 23S rRNA, and is important in its secondary structure. It is located near the subunit interface in the base of the L7/L12 stalk, and near the tRNA binding site of the peptidyltransferase center. This Lactiplantibacillus plantarum (strain ATCC BAA-793 / NCIMB 8826 / WCFS1) (Lactobacillus plantarum) protein is Large ribosomal subunit protein uL6.